The chain runs to 172 residues: Co-chaperone protein HscB (172 aa).

One can recognise a J domain in the interval 2-74 (DYFTLFGLPI…LKRAEYMLSL (73 aa)).

Belongs to the HscB family. As to quaternary structure, interacts with HscA and stimulates its ATPase activity. Interacts with IscU.

Its function is as follows. Co-chaperone involved in the maturation of iron-sulfur cluster-containing proteins. Seems to help targeting proteins to be folded toward HscA. The protein is Co-chaperone protein HscB of Pectobacterium carotovorum subsp. carotovorum (strain PC1).